The chain runs to 251 residues: Sec-independent protein translocase protein TatC (251 aa).

A run of 6 helical transmembrane segments spans residues 23-43 (AFIIIFAICYYFSDYIYSFLL), 73-93 (SAFTAFTIIIPIIALECYLFI), 104-124 (IIAFILFMSPILFWCGSIFVF), 159-179 (LVIHLIIAFGIAFQLPIVIIV), 197-217 (IAVVINFIIAGILTPPDILSQ), and 218-238 (FALAIPLLLLYETSIIICNFI).

The protein belongs to the TatC family. As to quaternary structure, the Tat system comprises two distinct complexes: a TatABC complex, containing multiple copies of TatA, TatB and TatC subunits, and a separate TatA complex, containing only TatA subunits. Substrates initially bind to the TatABC complex, which probably triggers association of the separate TatA complex to form the active translocon.

It is found in the cell inner membrane. Functionally, part of the twin-arginine translocation (Tat) system that transports large folded proteins containing a characteristic twin-arginine motif in their signal peptide across membranes. Together with TatB, TatC is part of a receptor directly interacting with Tat signal peptides. This chain is Sec-independent protein translocase protein TatC, found in Rickettsia prowazekii (strain Madrid E).